Reading from the N-terminus, the 745-residue chain is Serine/threonine-protein kinase BUR1 (745 aa).

The segment at 1-21 (MSVIAGHHVPRSNDQRQYDTP) is disordered. In terms of domain architecture, Protein kinase spans 44–349 (YEVIEKLGQG…ALDALNHKFF (306 aa)). ATP-binding positions include 50–58 (LGQGTFGVV) and lysine 73. Aspartate 179 (proton acceptor) is an active-site residue. Basic and acidic residues-rich tracts occupy residues 380–406 (DKEQ…RYNA), 428–475 (DYID…DIQN), and 493–508 (KLRE…KKYD). Residues 380-701 (DKEQAVSELK…EVSDLEEDSD (322 aa)) form a disordered region. The span at 516–534 (SRGSKSPSPSKLSSISQSK) shows a compositional bias: low complexity. The span at 547–557 (ASRESSLERKQ) shows a compositional bias: basic and acidic residues. Polar residues-rich tracts occupy residues 558–567 (VSNGIRTTTD) and 586–598 (LTSN…PTRN). Positions 599 to 631 (KSVERPKDLEKPTNGVTEDRNKKPVLEEKKEVV) are enriched in basic and acidic residues. Residues 632–660 (KPNLAIPKIKKSSSLVSLSSRSSTTPVIS) show a composition bias toward low complexity. Positions 661–674 (NPSKVTKRAASSVT) are enriched in polar residues. The segment covering 692–701 (EVSDLEEDSD) has biased composition (acidic residues).

The protein belongs to the protein kinase superfamily. CMGC Ser/Thr protein kinase family. CDC2/CDKX subfamily.

It localises to the nucleus. It carries out the reaction L-seryl-[protein] + ATP = O-phospho-L-seryl-[protein] + ADP + H(+). The catalysed reaction is L-threonyl-[protein] + ATP = O-phospho-L-threonyl-[protein] + ADP + H(+). It catalyses the reaction [DNA-directed RNA polymerase] + ATP = phospho-[DNA-directed RNA polymerase] + ADP + H(+). Functionally, serine/threonine-protein kinase involved in transcription regulation. Phosphorylates the UBC2/RAD6 ubiquitin-conjugating enzyme (E2), leading to monoubiquitination of histone H2B and the silencing of telomeric-associated genes. Also required for histone H3 methylation. Necessary for the recovery from pheromone-induced growth arrest in the cell cycle G1 phase. Required for pseudohyphal growth and virulence in mice. The polypeptide is Serine/threonine-protein kinase BUR1 (CRK1) (Candida albicans (strain SC5314 / ATCC MYA-2876) (Yeast)).